The sequence spans 420 residues: Zinc finger protein 362 (420 aa).

Disordered stretches follow at residues 1–28 (MSRS…WPPP), 54–80 (RPPH…ESSQ), and 115–155 (VTGL…SQSR). Residues 121 to 154 (STRTPSVSTSESSAGAGTGTGTSTPSTPTTTSQS) show a composition bias toward low complexity. Threonine 162 carries the post-translational modification Phosphothreonine. Positions 178 to 202 (TIQGHGLLGPPKSERGRKKIKAENP) are disordered. Lysine 198 is covalently cross-linked (Glycyl lysine isopeptide (Lys-Gly) (interchain with G-Cter in SUMO2)). 6 consecutive C2H2-type zinc fingers follow at residues 227-249 (YRCK…SKSH), 255-277 (HKCP…LRIH), 283-305 (YHCS…TRIH), 311-335 (YKCP…QRQH), 341-363 (YKCP…LSAH), and 371-393 (YCCS…MSKH). Serine 404 is subject to Phosphoserine.

The protein belongs to the krueppel C2H2-type zinc-finger protein family.

The protein localises to the nucleus. May be involved in transcriptional regulation. The protein is Zinc finger protein 362 (ZNF362) of Homo sapiens (Human).